The primary structure comprises 254 residues: L-rhamnose 1-dehydrogenase (NAD(P)(+)) (254 aa).

Residues Gly13, Ser15, Ile18, Asp64, Val65, and Asn91 each coordinate NADP(+). The Proton donor role is filled by Ser144. 4 residues coordinate beta-L-rhamnose: Ser144, Ser146, Gln154, and Tyr157. The NADP(+) site is built by Tyr157 and Lys161. Catalysis depends on Tyr157, which acts as the Proton acceptor. Residue Lys161 is the Lowers pKa of active site Tyr of the active site. A beta-L-rhamnose-binding site is contributed by Thr189. Ile190 contributes to the NADP(+) binding site. A beta-L-rhamnose-binding site is contributed by Asn195.

Belongs to the short-chain dehydrogenases/reductases (SDR) family.

It catalyses the reaction L-rhamnofuranose + NAD(+) = L-rhamnono-1,4-lactone + NADH + H(+). It carries out the reaction L-rhamnofuranose + NADP(+) = L-rhamnono-1,4-lactone + NADPH + H(+). Its pathway is carbohydrate degradation; L-rhamnose degradation. Functionally, NAD(P)-dependent dehydrogenase that catalyzes the oxidation of L-rhamnose to L-rhamnono-1,4-lactone. Also shows high activity with L-lyxose and low activity with L-mannose. Can utilize either NAD(+) or NADP(+), with a slight preference for NADP(+). Catalyzes the first step in an alternative pathway for rhamnose utilization that does not involve phosphorylated intermediates. This Sphingomonas sp. (strain SKA58) protein is L-rhamnose 1-dehydrogenase (NAD(P)(+)).